The following is a 271-amino-acid chain: Tryptophan synthase alpha chain (271 aa).

Catalysis depends on proton acceptor residues Glu-49 and Asp-60.

The protein belongs to the TrpA family. Tetramer of two alpha and two beta chains.

The enzyme catalyses (1S,2R)-1-C-(indol-3-yl)glycerol 3-phosphate + L-serine = D-glyceraldehyde 3-phosphate + L-tryptophan + H2O. It participates in amino-acid biosynthesis; L-tryptophan biosynthesis; L-tryptophan from chorismate: step 5/5. Functionally, the alpha subunit is responsible for the aldol cleavage of indoleglycerol phosphate to indole and glyceraldehyde 3-phosphate. In Burkholderia multivorans (strain ATCC 17616 / 249), this protein is Tryptophan synthase alpha chain.